Reading from the N-terminus, the 284-residue chain is MAQEKMELDLELPPGSAAAPSDGGGLRRSNSAPLIHGLSDNSQVFQGSVLRTRRNSTTVMNRHSLFVPSSPIRIPSSRLHQIKQEEGMNLMNRETVHEREVQVAMQMSQSWEESLSLSNNDFEKSSSPKQVDFVPVSPAPSPTRGIGKQCFSPSLQSLVSSSGLPPSPSPSPTRRFSSRRSQSPINCIRPSVLGPIKRKGVTEMEDHPKRLFQGSTNMLSSEALHQPDLGGCLSAHTLDDNRSSAGSSCDSPAEAGASTGSPVSLSDSRSPFLPVDLTAKLPID.

3 disordered regions span residues 1–32 (MAQE…SNSA), 112–198 (EESL…PIKR), and 235–284 (AHTL…LPID). Low complexity-rich tracts occupy residues 152–164 (SPSL…SSGL) and 172–184 (PTRR…SQSP). A compositionally biased stretch (polar residues) spans 258–269 (STGSPVSLSDSR).

It belongs to the FAM122 family.

It localises to the nucleus. It is found in the cytoplasm. Acts as an inhibitor of serine/threonine-protein phosphatase 2A (PP2A) activity. Potentiates ubiquitin-mediated proteasomal degradation of serine/threonine-protein phosphatase 2A catalytic subunit alpha (PPP2CA). Inhibits PP2A-mediated dephosphorylation of WEE1, promoting ubiquitin-mediated proteolysis of WEE1, thereby releasing G2/M checkpoint. This is P2R1A-PPP2R2A-interacting phosphatase regulator 1 from Gallus gallus (Chicken).